Consider the following 286-residue polypeptide: 4-hydroxybenzoate octaprenyltransferase (286 aa).

9 helical membrane-spanning segments follow: residues 22–42, 45–65, 90–110, 113–133, 142–162, 169–189, 212–232, 236–256, and 265–285; these read IGTLLLLWPTLWALWLASAGV, FSLLLIFTAGVFVMRSAGCVI, LTAVRALLFFLLLVLIAFVLV, LNQFTIYLSVGGLLLAAIYPF, QVVLGMAFSWAIPMAYGAVVG, WLLFLANLVWTIAYDTMYAMV, LYIALLQLGTLTLLAIIGWLE, VSYYFSLLLAAGLFIYQQWLI, and FRAFLNNNWVGMLIFAGIMLA.

Belongs to the UbiA prenyltransferase family. Mg(2+) is required as a cofactor.

The protein resides in the cell inner membrane. It catalyses the reaction all-trans-octaprenyl diphosphate + 4-hydroxybenzoate = 4-hydroxy-3-(all-trans-octaprenyl)benzoate + diphosphate. Its pathway is cofactor biosynthesis; ubiquinone biosynthesis. Catalyzes the prenylation of para-hydroxybenzoate (PHB) with an all-trans polyprenyl group. Mediates the second step in the final reaction sequence of ubiquinone-8 (UQ-8) biosynthesis, which is the condensation of the polyisoprenoid side chain with PHB, generating the first membrane-bound Q intermediate 3-octaprenyl-4-hydroxybenzoate. In Tolumonas auensis (strain DSM 9187 / NBRC 110442 / TA 4), this protein is 4-hydroxybenzoate octaprenyltransferase.